The primary structure comprises 239 residues: Ribosomal RNA small subunit methyltransferase G (239 aa).

Residues G79, F84, 130–131 (AE), and R149 each bind S-adenosyl-L-methionine. Residues 218 to 227 (KHKKTPKKYP) show a composition bias toward basic residues. Residues 218–239 (KHKKTPKKYPRQAGTPNKKPIA) are disordered.

This sequence belongs to the methyltransferase superfamily. RNA methyltransferase RsmG family.

Its subcellular location is the cytoplasm. Specifically methylates the N7 position of a guanine in 16S rRNA. This chain is Ribosomal RNA small subunit methyltransferase G, found in Leuconostoc citreum (strain KM20).